A 312-amino-acid chain; its full sequence is Ribosomal RNA small subunit methyltransferase H (312 aa).

S-adenosyl-L-methionine is bound by residues 34–36 (GGH), aspartate 54, phenylalanine 78, aspartate 100, and glutamine 107.

Belongs to the methyltransferase superfamily. RsmH family.

The protein resides in the cytoplasm. It carries out the reaction cytidine(1402) in 16S rRNA + S-adenosyl-L-methionine = N(4)-methylcytidine(1402) in 16S rRNA + S-adenosyl-L-homocysteine + H(+). In terms of biological role, specifically methylates the N4 position of cytidine in position 1402 (C1402) of 16S rRNA. In Salmonella choleraesuis (strain SC-B67), this protein is Ribosomal RNA small subunit methyltransferase H.